The following is a 195-amino-acid chain: GRF1-interacting factor 2 (195 aa).

Residues Gln166–Lys195 form a disordered region. A compositionally biased stretch (gly residues) spans Gly171–Gly180. Residues Gly181–Lys195 are compositionally biased toward basic and acidic residues.

This sequence belongs to the SS18 family. Interacts with GRF1. As to expression, predominantly expressed in shoot tips containing the shoot apical meristem (SAM) and flower buds. Also expressed in mature flowers.

Its function is as follows. Transcription coactivator that plays a role in the regulation of cell expansion in leaf and cotyledons tissues. Component of a network formed by miR396, the GRFs and their interacting factors (GIFs) acting in the regulation of meristem function, at least partially through the control of cell proliferation. GIFs are involved in the positive regulation of cell proliferation of lateral organs in a functionally redundant manner. The protein is GRF1-interacting factor 2 (GIF2) of Arabidopsis thaliana (Mouse-ear cress).